The chain runs to 1024 residues: Integrator complex subunit 7 homolog (1024 aa).

Composition is skewed to polar residues over residues 1–11 (MSKYKNSSLLN) and 19–36 (PSLS…QLPP). 3 disordered regions span residues 1–109 (MSKY…PTNS), 472–502 (DNNN…NNNN), and 842–863 (NNNN…NNNN). Low complexity-rich tracts occupy residues 44-77 (STNN…NNTV), 85-96 (TAGSSTSSASSV), and 473-502 (NNNN…NNNN).

This sequence belongs to the Integrator subunit 7 family. Component of the Integrator complex. The core complex associates with protein phosphatase 2A subunits, to form the Integrator-PP2A (INTAC) complex.

It is found in the nucleus. Its subcellular location is the chromosome. It localises to the cytoplasm. Component of the integrator complex, a multiprotein complex that terminates RNA polymerase II (Pol II) transcription in the promoter-proximal region of genes. The integrator complex provides a quality checkpoint during transcription elongation by driving premature transcription termination of transcripts that are unfavorably configured for transcriptional elongation: the complex terminates transcription by (1) catalyzing dephosphorylation of the C-terminal domain (CTD) of Pol II subunit polr2a, (2) degrading the exiting nascent RNA transcript via endonuclease activity and (3) promoting the release of Pol II from bound DNA. The integrator complex is also involved in terminating the synthesis of non-coding Pol II transcripts, such as enhancer RNAs (eRNAs), small nuclear RNAs (snRNAs), telomerase RNAs and long non-coding RNAs (lncRNAs). The protein is Integrator complex subunit 7 homolog (ints7) of Dictyostelium discoideum (Social amoeba).